The primary structure comprises 213 residues: Large ribosomal subunit protein uL1 (213 aa).

This sequence belongs to the universal ribosomal protein uL1 family. As to quaternary structure, part of the 50S ribosomal subunit.

Its function is as follows. Binds directly to 23S rRNA. Probably involved in E site tRNA release. In terms of biological role, protein L1 is also a translational repressor protein, it controls the translation of its operon by binding to its mRNA. This chain is Large ribosomal subunit protein uL1, found in Picrophilus torridus (strain ATCC 700027 / DSM 9790 / JCM 10055 / NBRC 100828 / KAW 2/3).